Reading from the N-terminus, the 293-residue chain is 3-hydroxybutyryl-CoA dehydrogenase (293 aa).

The protein belongs to the 3-hydroxyacyl-CoA dehydrogenase family.

The enzyme catalyses (3S)-3-hydroxybutanoyl-CoA + NADP(+) = acetoacetyl-CoA + NADPH + H(+). Its pathway is lipid metabolism; butanoate metabolism. The protein is 3-hydroxybutyryl-CoA dehydrogenase (hbdA) of Bradyrhizobium diazoefficiens (strain JCM 10833 / BCRC 13528 / IAM 13628 / NBRC 14792 / USDA 110).